Reading from the N-terminus, the 489-residue chain is MTTTEQRLTVESRNGIDYKVADLSLAEFGRKEIRLAEHEMPGLMALRREYAEVAPLKGARISGSLHMTVQTAVLIETLVSLGAEVRWASCNIFSTQDHAAAAVVVGPHGTPEEPKGTPVFAWKGETLEEYWWAAEQMLTWPGEPANMILDDGGDATMLVLRGAQFEKAGVVPPAEDDDSAEYKVFLNLLRERFETDKTKWTKIAESVKGVTEETTTGVLRLYQFEAAGELPFPAINVNDSVTKSKFDNKYGTRHSLIDGINRGTDVLIGGKKVLICGYGDVGKGCAESLAGQGARVQVTEIDPINALQALMDGFDVVTVEQAIGSADIVITSTGNKDIITLDHMKAMKDKAILGNIGHFDNEIDMAALERSGATRINIKPQVDEWTFDDGHSIVLLSEGRLLNLGNATGHPSFVMSNSFSNQVIAQIELWTKNDEYDNAVYRLAKHLDEKVARIHVEALGGTLTKLTKEQAEYINVDVEGPYKPEHYRY.

Positions 68, 151, and 213 each coordinate substrate. An NAD(+)-binding site is contributed by 214–216 (TTT). Substrate-binding residues include K243 and D247. NAD(+) is bound by residues N248, 277-282 (GYGDVG), E300, N335, 356-358 (IGH), and N403.

This sequence belongs to the adenosylhomocysteinase family. It depends on NAD(+) as a cofactor.

It localises to the cytoplasm. The enzyme catalyses S-adenosyl-L-homocysteine + H2O = L-homocysteine + adenosine. It functions in the pathway amino-acid biosynthesis; L-homocysteine biosynthesis; L-homocysteine from S-adenosyl-L-homocysteine: step 1/1. May play a key role in the regulation of the intracellular concentration of adenosylhomocysteine. This Mycobacterium sp. (strain KMS) protein is Adenosylhomocysteinase.